Reading from the N-terminus, the 59-residue chain is Large ribosomal subunit protein uL30 (59 aa).

This sequence belongs to the universal ribosomal protein uL30 family. Part of the 50S ribosomal subunit.

In Bacillus licheniformis (strain ATCC 14580 / DSM 13 / JCM 2505 / CCUG 7422 / NBRC 12200 / NCIMB 9375 / NCTC 10341 / NRRL NRS-1264 / Gibson 46), this protein is Large ribosomal subunit protein uL30.